The following is a 172-amino-acid chain: Outer-membrane lipoprotein carrier protein (172 aa).

A signal peptide spans 1 to 16 (MRIALLWVAFGALALA).

Belongs to the LolA family. As to quaternary structure, monomer.

It localises to the periplasm. In terms of biological role, participates in the translocation of lipoproteins from the inner membrane to the outer membrane. Only forms a complex with a lipoprotein if the residue after the N-terminal Cys is not an aspartate (The Asp acts as a targeting signal to indicate that the lipoprotein should stay in the inner membrane). This chain is Outer-membrane lipoprotein carrier protein, found in Wolinella succinogenes (strain ATCC 29543 / DSM 1740 / CCUG 13145 / JCM 31913 / LMG 7466 / NCTC 11488 / FDC 602W) (Vibrio succinogenes).